Consider the following 465-residue polypeptide: Trigger factor (465 aa).

The PPIase FKBP-type domain maps to Gly163–Ala248. The tract at residues Glu431–Lys465 is disordered. Basic and acidic residues predominate over residues Glu443–Lys465.

This sequence belongs to the FKBP-type PPIase family. Tig subfamily.

Its subcellular location is the cytoplasm. The catalysed reaction is [protein]-peptidylproline (omega=180) = [protein]-peptidylproline (omega=0). Involved in protein export. Acts as a chaperone by maintaining the newly synthesized protein in an open conformation. Functions as a peptidyl-prolyl cis-trans isomerase. The protein is Trigger factor of Mesomycoplasma hyopneumoniae (strain 232) (Mycoplasma hyopneumoniae).